Here is a 92-residue protein sequence, read N- to C-terminus: Conotoxin Mr15.3 (92 aa).

A signal peptide spans 1 to 20; sequence MSTLKMMLLILLLLLPMATF. Residues 21-53 constitute a propeptide that is removed on maturation; it reads DSDGQAIPGGGIPSAVNSRVRGDEKSGRSLEKR.

This sequence belongs to the conotoxin N superfamily. In terms of processing, contains 4 disulfide bonds. Expressed by the venom duct.

It localises to the secreted. In Conus marmoreus (Marble cone), this protein is Conotoxin Mr15.3.